A 296-amino-acid chain; its full sequence is NADH-cytochrome b5 reductase 2 (296 aa).

Residues 12–29 traverse the membrane as a helical segment; it reads LPIALGVGAASIATAIIL. Positions 47–151 constitute an FAD-binding FR-type domain; that stretch reads NEWIDLPIIK…KGPITKWEWK (105 aa). An FAD-binding site is contributed by 154-189; sequence SYDSITLLGAGTGINPLYQLVHHIAENPEDNTKIHL.

The protein belongs to the flavoprotein pyridine nucleotide cytochrome reductase family. The cofactor is FAD.

The protein localises to the mitochondrion outer membrane. The enzyme catalyses 2 Fe(III)-[cytochrome b5] + NADH = 2 Fe(II)-[cytochrome b5] + NAD(+) + H(+). Its function is as follows. May mediate the reduction of outer membrane cytochrome b5. This Kluyveromyces lactis (strain ATCC 8585 / CBS 2359 / DSM 70799 / NBRC 1267 / NRRL Y-1140 / WM37) (Yeast) protein is NADH-cytochrome b5 reductase 2 (MCR1).